Consider the following 240-residue polypeptide: Probable transcriptional regulatory protein SO_3401 (240 aa).

It belongs to the TACO1 family.

It localises to the cytoplasm. This chain is Probable transcriptional regulatory protein SO_3401, found in Shewanella oneidensis (strain ATCC 700550 / JCM 31522 / CIP 106686 / LMG 19005 / NCIMB 14063 / MR-1).